The sequence spans 299 residues: Acetylglutamate kinase (299 aa).

Residues 70 to 71 (GG), R92, and N186 contribute to the substrate site.

Belongs to the acetylglutamate kinase family. ArgB subfamily.

The protein resides in the cytoplasm. The enzyme catalyses N-acetyl-L-glutamate + ATP = N-acetyl-L-glutamyl 5-phosphate + ADP. The protein operates within amino-acid biosynthesis; L-arginine biosynthesis; N(2)-acetyl-L-ornithine from L-glutamate: step 2/4. Functionally, catalyzes the ATP-dependent phosphorylation of N-acetyl-L-glutamate. This chain is Acetylglutamate kinase, found in Petrotoga mobilis (strain DSM 10674 / SJ95).